The chain runs to 467 residues: UDP-N-acetylmuramate--L-alanine ligase (467 aa).

114–120 contacts ATP; the sequence is GTHGKTT.

This sequence belongs to the MurCDEF family.

Its subcellular location is the cytoplasm. It carries out the reaction UDP-N-acetyl-alpha-D-muramate + L-alanine + ATP = UDP-N-acetyl-alpha-D-muramoyl-L-alanine + ADP + phosphate + H(+). Its pathway is cell wall biogenesis; peptidoglycan biosynthesis. Functionally, cell wall formation. The polypeptide is UDP-N-acetylmuramate--L-alanine ligase (Rhodopseudomonas palustris (strain BisB18)).